A 353-amino-acid polypeptide reads, in one-letter code: DNA-repair protein XRCC1 (353 aa).

Residues 1 to 12 (MSQKRNLPSWMS) are compositionally biased toward polar residues. The disordered stretch occupies residues 1–57 (MSQKRNLPSWMSSRDPEITPSKSHCKKPKDEGPTEEHNSRNAPSNKSEHAEPSSNTT). Positions 28–39 (PKDEGPTEEHNS) are enriched in basic and acidic residues. The 89-residue stretch at 58-146 (EFSKLMEGVV…KLVDIEQYLM (89 aa)) folds into the BRCT 1 domain. The disordered stretch occupies residues 150 to 194 (KPWRKSSSPQDANREKREHLSKKPEKQVEKKTETRGTPSTSSKNR). Basic and acidic residues predominate over residues 161–183 (ANREKREHLSKKPEKQVEKKTET). Over residues 184–194 (RGTPSTSSKNR) the composition is skewed to polar residues. A coiled-coil region spans residues 240 to 260 (AAEGVLTCLQDAIDSLEQKQD). Residues 266–347 (ELWSFVPRVV…EEEIELAYRN (82 aa)) form the BRCT 2 domain.

In terms of assembly, homodimer. Interacts with polynucleotide kinase (PNK), DNA polymerase-beta (POLB) and DNA ligase III (LIG3). Interacts with ZDP and ROS1. Binds to various forms of double-stranded DNA (e.g. methylated, unmethylated, with single-nucleotide gap flanked by 3'-phosphate or 5'-phosphate ends).

It is found in the nucleus. Functionally, corrects defective DNA strand-break repair and sister chromatid exchange following treatment with ionizing radiation and alkylating agents. Involved in DNA demethylation pathway by stimulating cytosine methylation (5-meC) excision, gap tailoring, and DNA ligation. The polypeptide is DNA-repair protein XRCC1 (Arabidopsis thaliana (Mouse-ear cress)).